The primary structure comprises 572 residues: DBH-like monooxygenase protein 2 homolog (572 aa).

The signal sequence occupies residues 1 to 26 (MGTCLKGNMSVLSLVLFLLSVQQFWA). N-linked (GlcNAc...) asparagine glycans are attached at residues asparagine 8, asparagine 64, asparagine 187, and asparagine 203. The Extracellular segment spans residues 27-552 (QEDPLLPFSE…SPPEPCVRAC (526 aa)). A DOMON domain is found at 42 to 157 (HNVQLKWGFD…LPMKLIYAYG (116 aa)). Tyrosine 207 is a catalytic residue. Cystine bridges form between cysteine 209–cysteine 256 and cysteine 244–cysteine 263. 2 residues coordinate Cu cation: histidine 237 and histidine 238. Histidine 301 contacts Cu cation. Residue asparagine 306 is glycosylated (N-linked (GlcNAc...) asparagine). Intrachain disulfides connect cysteine 358-cysteine 472 and cysteine 435-cysteine 457. Histidine 381 is an active-site residue. Histidine 381, histidine 383, and methionine 456 together coordinate Cu cation. N-linked (GlcNAc...) asparagine glycosylation is found at asparagine 468, asparagine 503, asparagine 518, and asparagine 534. The chain crosses the membrane as a helical span at residues 553-571 (ATKNLAFMSLFLCLAGMWA). Position 572 (serine 572) is a topological domain, cytoplasmic.

It belongs to the copper type II ascorbate-dependent monooxygenase family. Cu(2+) serves as cofactor.

It localises to the membrane. This is DBH-like monooxygenase protein 2 homolog (moxd2) from Danio rerio (Zebrafish).